Here is a 205-residue protein sequence, read N- to C-terminus: ATP synthase subunit b 1 (205 aa).

The segment covering 1-15 (MFVSTAFAQTATESQ) has biased composition (polar residues). A disordered region spans residues 1–26 (MFVSTAFAQTATESQPAPAAGEHGAA). The span at 16 to 26 (PAPAAGEHGAA) shows a compositional bias: low complexity. Residues 56-78 (SQILWLAITFGLFYLFMSRVVLP) form a helical membrane-spanning segment.

The protein belongs to the ATPase B chain family. As to quaternary structure, F-type ATPases have 2 components, F(1) - the catalytic core - and F(0) - the membrane proton channel. F(1) has five subunits: alpha(3), beta(3), gamma(1), delta(1), epsilon(1). F(0) has three main subunits: a(1), b(2) and c(10-14). The alpha and beta chains form an alternating ring which encloses part of the gamma chain. F(1) is attached to F(0) by a central stalk formed by the gamma and epsilon chains, while a peripheral stalk is formed by the delta and b chains.

The protein resides in the cell inner membrane. F(1)F(0) ATP synthase produces ATP from ADP in the presence of a proton or sodium gradient. F-type ATPases consist of two structural domains, F(1) containing the extramembraneous catalytic core and F(0) containing the membrane proton channel, linked together by a central stalk and a peripheral stalk. During catalysis, ATP synthesis in the catalytic domain of F(1) is coupled via a rotary mechanism of the central stalk subunits to proton translocation. Functionally, component of the F(0) channel, it forms part of the peripheral stalk, linking F(1) to F(0). This is ATP synthase subunit b 1 from Brucella anthropi (strain ATCC 49188 / DSM 6882 / CCUG 24695 / JCM 21032 / LMG 3331 / NBRC 15819 / NCTC 12168 / Alc 37) (Ochrobactrum anthropi).